A 260-amino-acid chain; its full sequence is Voltage-dependent calcium channel gamma-6 subunit (260 aa).

4 helical membrane passes run 43–63 (LLVA…EFWV), 143–163 (VIAV…IMVL), 169–189 (SLLR…FVSL), and 221–241 (LGCG…FLLL).

It belongs to the PMP-22/EMP/MP20 family. CACNG subfamily. As to quaternary structure, interacts with CACNA1C. Identified in a complex with the L-type calcium channel subunits CACNA1C, CACNA2D1 and either CACNB1 or CACNB2. As to expression, detected in brain and heart (at protein level).

It localises to the cell membrane. Functionally, regulates the activity of L-type calcium channels that contain CACNA1C as pore-forming subunit. This is Voltage-dependent calcium channel gamma-6 subunit (Cacng6) from Mus musculus (Mouse).